We begin with the raw amino-acid sequence, 320 residues long: Cytochrome f (320 aa).

A signal peptide spans 1 to 35 (MQMRNTFSWIKEEIIRFIAVSLIIYIITRAPISNA). 4 residues coordinate heme: Tyr36, Cys56, Cys59, and His60. The helical transmembrane segment at 286-306 (VQGLLLFLASIILAQIFLVLK) threads the bilayer.

Belongs to the cytochrome f family. In terms of assembly, the 4 large subunits of the cytochrome b6-f complex are cytochrome b6, subunit IV (17 kDa polypeptide, petD), cytochrome f and the Rieske protein, while the 4 small subunits are PetG, PetL, PetM and PetN. The complex functions as a dimer. Heme serves as cofactor.

Its subcellular location is the plastid. The protein localises to the chloroplast thylakoid membrane. In terms of biological role, component of the cytochrome b6-f complex, which mediates electron transfer between photosystem II (PSII) and photosystem I (PSI), cyclic electron flow around PSI, and state transitions. The chain is Cytochrome f from Morus indica (Mulberry).